Consider the following 373-residue polypeptide: MRENCTDYRDLFINDRPMMDARAPVEFHKGAFPGVINLPLMNDIERQKVGTCYKQHGQQAAIELGHQLVSGRTKAERIEAWASFAKANPDGYLYCFRGGLRSQIVQQWLKSEAGIDYPRVIGGYKAMRGFLLETTEQAVAECDFVLVGGMTGTGKTEVLAQLHNAVDLEAHANHRGSSFGKRASGQPAQIDFENALAIDLLKRRAAGQRQFVLEDEARLIGRCSLPLPLYQGMQHYPLVWLEDSLGDRVERILQAYVVELCAEFVAVEGAEAGFAAFAARLRESLANITRRLGGERYQRLAAIMDQALEEQARDGQVDTHRGWIEALLVEYYDPMYVFQRESKAGRIEFAGEQQAVVEYLRQRSGHFPEAPAS.

In terms of domain architecture, Rhodanese spans Phe12–Glu136. The S-selanylcysteine intermediate role is filled by Cys95.

This sequence belongs to the SelU family. Monomer.

It carries out the reaction 5-methylaminomethyl-2-thiouridine(34) in tRNA + selenophosphate + (2E)-geranyl diphosphate + H2O + H(+) = 5-methylaminomethyl-2-selenouridine(34) in tRNA + (2E)-thiogeraniol + phosphate + diphosphate. It catalyses the reaction 5-methylaminomethyl-2-thiouridine(34) in tRNA + (2E)-geranyl diphosphate = 5-methylaminomethyl-S-(2E)-geranyl-thiouridine(34) in tRNA + diphosphate. The catalysed reaction is 5-methylaminomethyl-S-(2E)-geranyl-thiouridine(34) in tRNA + selenophosphate + H(+) = 5-methylaminomethyl-2-(Se-phospho)selenouridine(34) in tRNA + (2E)-thiogeraniol. The enzyme catalyses 5-methylaminomethyl-2-(Se-phospho)selenouridine(34) in tRNA + H2O = 5-methylaminomethyl-2-selenouridine(34) in tRNA + phosphate. Its function is as follows. Involved in the post-transcriptional modification of the uridine at the wobble position (U34) of tRNA(Lys), tRNA(Glu) and tRNA(Gln). Catalyzes the conversion of 2-thiouridine (S2U-RNA) to 2-selenouridine (Se2U-RNA). Acts in a two-step process involving geranylation of 2-thiouridine (S2U) to S-geranyl-2-thiouridine (geS2U) and subsequent selenation of the latter derivative to 2-selenouridine (Se2U) in the tRNA chain. The sequence is that of tRNA 2-selenouridine synthase from Ectopseudomonas mendocina (strain ymp) (Pseudomonas mendocina).